We begin with the raw amino-acid sequence, 504 residues long: Dolichol kinase sec59 (504 aa).

Topologically, residues 1–55 (MYIMSKKCYDTSEKIDREQECVEVNYQHRNFESILEIFSVLFIPFLCNSGKKFLQ) are cytoplasmic. Residues 56-76 (ISNASFFLPACFYLLGSSSII) form a helical membrane-spanning segment. Gln-77 is a topological domain (lumenal). Residues 78–98 (LYEPLLWLSSFPFCILYVGFG) traverse the membrane as a helical segment. The Cytoplasmic portion of the chain corresponds to 99-157 (ENSVLYHEMYTVCLYNALLSLTQRWKWLSIVLDGLGNSSVNLKLHETVILAFLEITQNS). Residues 158–178 (FTFIEGILICTGLTGLCFATF) form a helical membrane-spanning segment. Topologically, residues 179-187 (SYEVSPVVS) are lumenal. The helical transmembrane segment at 188–208 (VLSGVLLISLPTLILLNLCIL) threads the bilayer. The Cytoplasmic segment spans residues 209-215 (KLAAKLH). A helical membrane pass occupies residues 216–236 (LSALFTTCLIYFFSALLVFLV). The Lumenal segment spans residues 237–263 (SRSWVAGQLGQAPEVWLFNQIFSHRNS). A helical transmembrane segment spans residues 264 to 284 (LTRIKIIIWWIICLGCFIFIL). The Cytoplasmic portion of the chain corresponds to 285-325 (LRSNRNNPLGKYFTTEDEVLNFRRKTYHALVVFLFLPVCCL). A helical membrane pass occupies residues 326-347 (DPHFLHLSFSGVLFIFLFVEGI). The Lumenal portion of the chain corresponds to 348–373 (RILRLKPFGKMIHEFLWEYTDNRDHK). A helical transmembrane segment spans residues 374–394 (GPLIISHIYLLIGCAIPIWLS). Residues 395-403 (NALKGPVAS) are Cytoplasmic-facing. The chain crosses the membrane as a helical span at residues 404–424 (VELLVGVLCLGCGDSMASIIG). Over 425–440 (KRFGKHRISKTNKSIE) the chain is Lumenal. Residues 441-461 (GVFAFSISVFLVLHLTQAFHV) form a helical membrane-spanning segment. Cys-462 is a topological domain (cytoplasmic). The chain crosses the membrane as a helical span at residues 463–483 (PSVTFWKTLFMSLCTAILEGV). Residues 484–504 (STENDNLILPMYMWVLYQALD) lie on the Lumenal side of the membrane.

Belongs to the polyprenol kinase family.

It localises to the endoplasmic reticulum membrane. It carries out the reaction a di-trans,poly-cis-dolichol + CTP = a di-trans,poly-cis-dolichyl phosphate + CDP + H(+). Its pathway is protein modification; protein glycosylation. Its function is as follows. Catalyzes CTP-mediated phosphorylation of dolichol, the terminal step in de novo dolichyl monophosphate (Dol-P) biosynthesis. Dol-P is a lipid carrier essential for the synthesis of N-linked and O-linked oligosaccharides and for GPI anchors. The chain is Dolichol kinase sec59 from Schizosaccharomyces pombe (strain 972 / ATCC 24843) (Fission yeast).